An 865-amino-acid chain; its full sequence is Fanconi-associated nuclease 1 homolog (865 aa).

The UBZ4-type zinc finger occupies 35 to 62 (GKICPLCETKFSLASYKSHMNTCNVADD). Zn(2+) contacts are provided by Cys38, Cys41, His53, and Cys57. 2 disordered regions span residues 90–140 (DASF…SLDV) and 162–187 (RRSS…PVKK). Basic and acidic residues-rich tracts occupy residues 93–112 (FSDK…REVP) and 174–187 (DQAD…PVKK). Positions 682, 810, 825, and 826 each coordinate Mn(2+). In terms of domain architecture, VRR-NUC spans 744 to 857 (QELIEENIRK…GIRAEVCHVA (114 aa)).

Belongs to the FAN1 family. Mn(2+) is required as a cofactor. It depends on Mg(2+) as a cofactor.

It localises to the nucleus. It catalyses the reaction Hydrolytically removes 5'-nucleotides successively from the 3'-hydroxy termini of 3'-hydroxy-terminated oligonucleotides.. Its function is as follows. Nuclease required for the repair of DNA interstrand cross-links (ICL). Acts as a 5'-3' exonuclease that anchors at a cut end of DNA and cleaves DNA successively at every third nucleotide, allowing to excise an ICL from one strand through flanking incisions. The chain is Fanconi-associated nuclease 1 homolog (fan-1) from Caenorhabditis elegans.